The chain runs to 447 residues: uncharacterized protein (447 aa).

A run of 2 helical transmembrane segments spans residues 380–400 and 412–432; these read VLEI…LLLT and ILGF…GVYV.

The protein localises to the cell membrane. This is an uncharacterized protein from Methanocaldococcus jannaschii (strain ATCC 43067 / DSM 2661 / JAL-1 / JCM 10045 / NBRC 100440) (Methanococcus jannaschii).